Here is a 129-residue protein sequence, read N- to C-terminus: Protein GLUTAMINE DUMPER 2 (129 aa).

Residues Met1–Tyr34 lie on the Extracellular side of the membrane. A helical transmembrane segment spans residues Leu35–Cys55. The Cytoplasmic segment spans residues Ser56–Gly129. Positions Arg66–Pro89 are disordered. The VIMAG motif lies at Val94 to Gly98. The disordered stretch occupies residues Ala106–Gly129. The segment covering Asp120 to Gly129 has biased composition (basic and acidic residues).

Belongs to the GLUTAMINE DUMPER 1 (TC 9.B.60) family. In terms of tissue distribution, expressed in the vascular tissues.

Its subcellular location is the membrane. Its function is as follows. Probable subunit of an amino acid transporter involved in the regulation of the amino acid metabolism. Stimulates amino acid export by activating nonselective amino acid facilitators. This is Protein GLUTAMINE DUMPER 2 (GDU2) from Arabidopsis thaliana (Mouse-ear cress).